Here is a 270-residue protein sequence, read N- to C-terminus: 3-methyl-2-oxobutanoate hydroxymethyltransferase (270 aa).

Positions 41 and 80 each coordinate Mg(2+). 3-methyl-2-oxobutanoate-binding positions include D41–S42, D80, and K109. Residue E111 participates in Mg(2+) binding. E178 (proton acceptor) is an active-site residue.

This sequence belongs to the PanB family. Homodecamer; pentamer of dimers. Requires Mg(2+) as cofactor.

The protein resides in the cytoplasm. It carries out the reaction 3-methyl-2-oxobutanoate + (6R)-5,10-methylene-5,6,7,8-tetrahydrofolate + H2O = 2-dehydropantoate + (6S)-5,6,7,8-tetrahydrofolate. It functions in the pathway cofactor biosynthesis; (R)-pantothenate biosynthesis; (R)-pantoate from 3-methyl-2-oxobutanoate: step 1/2. Catalyzes the reversible reaction in which hydroxymethyl group from 5,10-methylenetetrahydrofolate is transferred onto alpha-ketoisovalerate to form ketopantoate. The protein is 3-methyl-2-oxobutanoate hydroxymethyltransferase of Thermotoga neapolitana (strain ATCC 49049 / DSM 4359 / NBRC 107923 / NS-E).